The chain runs to 494 residues: Probable malate:quinone oxidoreductase (494 aa).

This sequence belongs to the MQO family. FAD is required as a cofactor.

The catalysed reaction is (S)-malate + a quinone = a quinol + oxaloacetate. It participates in carbohydrate metabolism; tricarboxylic acid cycle; oxaloacetate from (S)-malate (quinone route): step 1/1. The protein is Probable malate:quinone oxidoreductase of Helicobacter hepaticus (strain ATCC 51449 / 3B1).